The primary structure comprises 319 residues: Ubiquinone biosynthesis protein COQ9, mitochondrial (319 aa).

Residues Met1 to Leu45 constitute a mitochondrion transit peptide. The SIFI-degron motif lies at Arg17–Ala32. Residues Arg46 to Gln99 are disordered. A compositionally biased stretch (acidic residues) spans Gly87–Glu98. Lys176 carries the N6-acetyllysine modification. Arg245 serves as a coordination point for a 1,2-diacylglycero-3-phosphoethanolamine.

This sequence belongs to the COQ9 family. In terms of assembly, homodimer. Heterodimer; two heterodimers of COQ7:COQ9 come together on the same side of the lipid pseudo-bilayer and form a curved tetramer with a hydrophobic surface suitable for membrane interaction. These two tetramers assemble into a soluble octamer with a pseudo-bilayer of lipids captured within. Interacts with COQ7; this interaction allows ubiquinone (CoQ) isoprene intermediates presentation to COQ7 and facilitates the COQ7-mediated hydroxylase step. Post-translationally, in response to mitochondrial stress, the precursor protein is ubiquitinated by the SIFI complex in the cytoplasm before mitochondrial import, leading to its degradation. Within the SIFI complex, UBR4 initiates ubiquitin chain that are further elongated or branched by KCMF1.

It localises to the mitochondrion. Its pathway is cofactor biosynthesis; ubiquinone biosynthesis. Membrane-associated protein that warps the membrane surface to access and bind aromatic isoprenes with high specificity, including ubiquinone (CoQ) isoprene intermediates and presents them directly to COQ7, therefore facilitating the COQ7-mediated hydroxylase step. Participates in the biosynthesis of coenzyme Q, also named ubiquinone, an essential lipid-soluble electron transporter for aerobic cellular respiration. This is Ubiquinone biosynthesis protein COQ9, mitochondrial from Bos taurus (Bovine).